Consider the following 258-residue polypeptide: MDQTSSSTQILVSLMENAQPDPTAGQPVAQVILDNFCLSSMYSPDVLRNPRAQHTIKTAVFQWIDEHHRKMYDCPIEPPLRFTDDAHLSADRCWHHLIGKLERVVSVLRAMRAMSRFEHNVFVFLPYCKRLRALVELFRHDYCCQSTVAGCARALDETIADAQRHLLVVRSMSERAAVMLVFSDWVRVYQCNICEDSSAEEQFLKPNVCCGYRVCNACYAKLWEFCTGAYPVCPICKTGFKSSSSNKRLQKADDPATL.

An RING-type zinc finger spans residues 191–237; the sequence is CNICEDSSAEEQFLKPNVCCGYRVCNACYAKLWEFCTGAYPVCPICK.

This chain is Immediate-early protein IE-0 (IE-0), found in Lymantria dispar multicapsid nuclear polyhedrosis virus (LdMNPV).